Here is a 245-residue protein sequence, read N- to C-terminus: MPYRKYREKKYETKYREAFKVFQEKIGITFTDEKLLIQAFTHSSYVNEHRKKPHEDNERLEFLGDAVLELTVSQYLFQKYPTMSEGELTKLRAAIVCEPSLVRFANELSFGSLVLLGKGEEMTGGRERPALLADVFEAFIGALYLDQGLETVWEFLKEIVYPKINEGAFSHVMDYKSQLQELIQRDGSGNVEYQILQEKGPAHNREFVSRVTLNNVALGLGSGKSKKEAEQQAAAEALKKLKEQL.

The 130-residue stretch at 19 to 148 (FKVFQEKIGI…FIGALYLDQG (130 aa)) folds into the RNase III domain. E61 lines the Mg(2+) pocket. The active site involves D65. The Mg(2+) site is built by D134 and E137. E137 is an active-site residue. The DRBM domain maps to 174–243 (DYKSQLQELI…AAEALKKLKE (70 aa)).

Belongs to the ribonuclease III family. In terms of assembly, homodimer. The cofactor is Mg(2+).

It is found in the cytoplasm. It carries out the reaction Endonucleolytic cleavage to 5'-phosphomonoester.. Digests double-stranded RNA. Involved in the processing of primary rRNA transcript to yield the immediate precursors to the large and small rRNAs (23S and 16S). Processes some mRNAs, and tRNAs when they are encoded in the rRNA operon. Processes pre-crRNA and tracrRNA of type II CRISPR loci if present in the organism. The chain is Ribonuclease 3 from Bacillus cereus (strain ATCC 14579 / DSM 31 / CCUG 7414 / JCM 2152 / NBRC 15305 / NCIMB 9373 / NCTC 2599 / NRRL B-3711).